The primary structure comprises 116 residues: uncharacterized protein (116 aa).

The protein belongs to the mimivirus L15/L51/R83 family.

This is an uncharacterized protein from Acanthamoeba polyphaga mimivirus (APMV).